Here is a 493-residue protein sequence, read N- to C-terminus: Transcript termination protein A18 (493 aa).

In terms of domain architecture, Helicase ATP-binding spans 100 to 256 (MIELKRPLYI…NSIINIAKLS (157 aa)). 113-120 (LACGFGKT) is a binding site for ATP. A DESH box motif is present at residues 206–209 (DESH).

The protein belongs to the helicase family. Poxviruses subfamily. Interacts with G2. Might be part of a transcription complex composed at least of G2, A18, and H5.

The protein resides in the virion. In terms of biological role, DNA helicase which seems to act as a postreplicative transcription termination factor. Involved in ATP-dependent release of nascent RNA. Forms a stable complex with single-stranded DNA, and to a lesser extent RNA. The chain is Transcript termination protein A18 from Cowpox virus (strain GRI-90 / Grishak) (CPV).